The sequence spans 439 residues: Hemagglutinin-esterase (439 aa).

The N-terminal stretch at 1 to 22 (MGSMCIAMAPRTLLLLIGCQLA) is a signal peptide. The interval 12 to 132 (TLLLLIGCQL…DNKRWMGNKA (121 aa)) is esterase domain 1. Topologically, residues 23–407 (LGFNEPLNVV…PVCLYDPLPV (385 aa)) are virion surface. Ser45 functions as the Nucleophile in the catalytic mechanism. Cys49 and Cys70 are oxidised to a cystine. Asn94, Asn152, Asn196, Asn246, and Asn316 each carry an N-linked (GlcNAc...) asparagine; by host glycan. A disulfide bond links Cys118 and Cys167. The tract at residues 133–281 (RFYALVYKKM…GNYKAVSLEY (149 aa)) is receptor binding. 2 disulfides stabilise this stretch: Cys202-Cys291 and Cys210-Cys264. The esterase domain 2 stretch occupies residues 282 to 395 (LLTIPSKAIC…QCPTAANIEF (114 aa)). Cys322 and Cys327 are joined by a disulfide. 2 N-linked (GlcNAc...) asparagine; by host glycosylation sites follow: Asn331 and Asn337. Active-site charge relay system residues include Asp342 and His345. 2 N-linked (GlcNAc...) asparagine; by host glycosylation sites follow: Asn360 and Asn374. Cys363 and Cys387 are disulfide-bonded. The helical transmembrane segment at 408-428 (ILLGVLLGIAVLIIVFLLFYF) threads the bilayer. Residues 429 to 439 (MTDSGVRLHEA) lie on the Intravirion side of the membrane.

Belongs to the influenza type C/coronaviruses hemagglutinin-esterase family. In terms of assembly, homodimer; disulfide-linked. Forms a complex with the M protein in the pre-Golgi. Associates then with S-M complex to form a ternary complex S-M-HE. Post-translationally, N-glycosylated in the host RER.

It is found in the virion membrane. The protein resides in the host cell membrane. The catalysed reaction is N-acetyl-9-O-acetylneuraminate + H2O = N-acetylneuraminate + acetate + H(+). The enzyme catalyses N-acetyl-4-O-acetylneuraminate + H2O = N-acetylneuraminate + acetate + H(+). Structural protein that makes short spikes at the surface of the virus. Contains receptor binding and receptor-destroying activities. Mediates de-O-acetylation of N-acetyl-4-O-acetylneuraminic acid, which is probably the receptor determinant recognized by the virus on the surface of erythrocytes and susceptible cells. This receptor-destroying activity is important for virus release as it probably helps preventing self-aggregation and ensures the efficient spread of the progeny virus from cell to cell. May serve as a secondary viral attachment protein for initiating infection, the spike protein being the major one. May become a target for both the humoral and the cellular branches of the immune system. This is Hemagglutinin-esterase from Puffinosis coronavirus (PV).